The primary structure comprises 122 residues: MARIAGVNIPTAKRVVIALTYIHGIGPKFAQEIVEKVGIPAERRVHQLTDAEVLQIREAIDRDYQVEGDLRRDTAMNIKRLMDLGCYRGLRHRRGLPVRGQRTHTNARTRKGPAKAIAGKKK.

Residues R99–K122 are disordered.

Belongs to the universal ribosomal protein uS13 family. In terms of assembly, part of the 30S ribosomal subunit. Forms a loose heterodimer with protein S19. Forms two bridges to the 50S subunit in the 70S ribosome.

Functionally, located at the top of the head of the 30S subunit, it contacts several helices of the 16S rRNA. In the 70S ribosome it contacts the 23S rRNA (bridge B1a) and protein L5 of the 50S subunit (bridge B1b), connecting the 2 subunits; these bridges are implicated in subunit movement. Contacts the tRNAs in the A and P-sites. The chain is Small ribosomal subunit protein uS13 from Rhizobium leguminosarum bv. trifolii (strain WSM2304).